Consider the following 134-residue polypeptide: Small ribosomal subunit protein uS11 (134 aa).

Residues 113–122 (SSITDATPQP) are compositionally biased toward polar residues. The disordered stretch occupies residues 113–134 (SSITDATPQPHNGCRPTKRRKV).

The protein belongs to the universal ribosomal protein uS11 family. Part of the 30S ribosomal subunit. Interacts with proteins S7 and S18. Binds to IF-3.

Located on the platform of the 30S subunit, it bridges several disparate RNA helices of the 16S rRNA. Forms part of the Shine-Dalgarno cleft in the 70S ribosome. This is Small ribosomal subunit protein uS11 from Corynebacterium aurimucosum (strain ATCC 700975 / DSM 44827 / CIP 107346 / CN-1) (Corynebacterium nigricans).